We begin with the raw amino-acid sequence, 752 residues long: MEDSGESMTGMLDSKSPESGDSPAMEGTTGTDDVTGLSTSDLTTEQPPESQEQTQPVSDMEFSVEHLKTAVQNIDQSASPAEPAAENSEQPPESNGQQEDQSEQPDDVKEAGQGDSESPSNMELEDAPKEPAEPAAEADPAAPQEPELPTEYERLSKVVEDNPEDFNGWVYLLQYVEQENHLLGSRKAFDAFFLHYPYCYGYWKKYADIERKHGYIQMADEVYRRGLQAIPLSVDLWLHYITFLRENQDTSDGEAESRIRASYEHAVLACGTDFRSDRLWEAYIAWETEQGKLANVTAIYDRLLCIPTQLYSQHFQKFKDHVQSNNPKHFLSEEEFVSLRVELANANKPSGDEDAETEAPGEELPPGTEDLPDPAKRVTEIENMRHKVIETRQEMFNHNEHEVSKRWAFEEGIKRPYFHVKALEKTQLNNWREYLDFELENGTPERVVVLFERCLIACALYEEFWIKYAKYLESYSTEAVRHIYKKACTVHLPKKPNVHLLWAAFEEQQGSIDEARSILKAVEVSVPGLAMVRLRRVSLERRHGNMEEAEALLQDAITNGRNSSESSFYSVKLARQLVKVQKSIGRAKKVLLEAVEKDETNPKLYLNLLELEYSGDVQQNEAEIIACFDRALSSSMALESRITFSQRKVDFLEDFGSDINTLMAAYEQHQRLLAEQESFKRKAENGSEEPDAKRQRTDDQSVASGQMMDMQANHAGYNYNNWYQYNSWGSQNSWGQYGQYGQYNQYYPPPPT.

The disordered stretch occupies residues 1-148 (MEDSGESMTG…DPAAPQEPEL (148 aa)). Over residues 28–42 (TTGTDDVTGLSTSDL) the composition is skewed to polar residues. 3 stretches are compositionally biased toward low complexity: residues 43–56 (TTEQPPESQEQTQP), 76–94 (QSASPAEPAAENSEQPPES), and 133–148 (EPAAEADPAAPQEPEL). HAT repeat units lie at residues 180-212 (NHLLGSRKAFDAFFLHYPYCYGYWKKYADIERK), 214-246 (GYIQMADEVYRRGLQAIPLSVDLWLHYITFLRE), and 254-289 (EAESRIRASYEHAVLACGTDFRSDRLWEAYIAWETE). Residues 347–374 (NKPSGDEDAETEAPGEELPPGTEDLPDP) form a disordered region. The span at 352-361 (DEDAETEAPG) shows a compositional bias: acidic residues. 2 HAT repeats span residues 408–440 (AFEEGIKRPYFHVKALEKTQLNNWREYLDFELE) and 442–474 (GTPERVVVLFERCLIACALYEEFWIKYAKYLES). Positions 678 to 699 (SFKRKAENGSEEPDAKRQRTDD) are enriched in basic and acidic residues. Residues 678-703 (SFKRKAENGSEEPDAKRQRTDDQSVA) form a disordered region. An HAT 6 repeat occupies 700–731 (QSVASGQMMDMQANHAGYNYNNWYQYNSWGSQ).

Belongs to the PRP39 family.

The protein localises to the nucleus. Functionally, involved in pre-mRNA splicing. The sequence is that of Pre-mRNA-processing factor 39 (prpf39) from Danio rerio (Zebrafish).